Reading from the N-terminus, the 249-residue chain is DnaJ homolog subfamily C member 5 homolog (249 aa).

The residue at position 12 (Ser12) is a Phosphoserine. Position 13 is a phosphothreonine (Thr13). 2 positions are modified to phosphoserine: Ser14 and Ser17. The 70-residue stretch at 15–84 (GDSLYEILGL…RNIYDNYGSL (70 aa)) folds into the J domain. Residue Tyr19 is modified to Phosphotyrosine. The segment covering 146 to 162 (HDQYSHLNRPDGNREGN) has biased composition (basic and acidic residues). 2 disordered regions span residues 146–177 (HDQYSHLNRPDGNREGNDMPTHLGQPPRLEDV) and 218–249 (PFTGAPVAANENTSLNTTEQTTYTPDMVNQKY). A compositionally biased stretch (polar residues) spans 227-241 (NENTSLNTTEQTTYT).

In terms of processing, fatty acylated. Heavily palmitoylated in the cysteine string motif. Expressed in wide range of synaptic terminals: embryonic nervous system, larval neuromuscular junctions, adult visual system (neuropil of optic ganglia and terminal of R1-8 photoreceptors) and thoracic neuromuscular junctions. Also expressed in non-neuronal cells: follicle cells, spermatheca, testis and ejaculatory bulb. Low level of expression is found in many neuronal and non-neuronal tissues.

Its subcellular location is the membrane. Its function is as follows. May have an important role in presynaptic function. The chain is DnaJ homolog subfamily C member 5 homolog from Drosophila melanogaster (Fruit fly).